We begin with the raw amino-acid sequence, 129 residues long: UPF0102 protein Ctha_1382 (129 aa).

Belongs to the UPF0102 family.

The protein is UPF0102 protein Ctha_1382 of Chloroherpeton thalassium (strain ATCC 35110 / GB-78).